Reading from the N-terminus, the 1021-residue chain is Spindle assembly checkpoint serine/threonine-protein kinase BUB1 (1021 aa).

The tract at residues 1-35 (MNLDLGSTVRGYESDKDTFPQSKGVSSSQKEQHSQ) is disordered. A compositionally biased stretch (polar residues) spans 19 to 35 (FPQSKGVSSSQKEQHSQ). The region spanning 47 to 212 (LLNDLEDMDD…VPDSRERLKG (166 aa)) is the BUB1 N-terminal domain. Positions 289–359 (NKKTSIYADQ…QRRGKKHTED (71 aa)) are interaction with BUB3. Disordered regions lie at residues 351–370 (RRGK…KKRK), 398–420 (FKDD…VQTT), 511–545 (VKDP…RPEK), and 567–600 (PKEQ…PFLT). The span at 517–528 (ETVSQQTTSTNE) shows a compositional bias: polar residues. Residues 569–580 (EQIRTEDKKSGD) are compositionally biased toward basic and acidic residues. Positions 582 to 596 (TETQTQLTSTTIQSS) are enriched in low complexity. Residues 705-1021 (YCIRGELGEG…QYKGKPSRRF (317 aa)) form the Protein kinase domain. Positions 715, 716, and 717 each coordinate ATP. The active-site Proton acceptor is Asp833. The ATP site is built by Asp837, Asn838, and Asp871.

The protein belongs to the protein kinase superfamily. Ser/Thr protein kinase family. BUB1 subfamily. In terms of assembly, part of complex consisting of MAD1, BUB1 and BUB3 after activation of spindle checkpoint. Part of the BUB1-BUB3 complex, composed of BUB1 and BUB3. Interacts with SPC105 (via phosphorylated MELT motifs); the interaction occurs when part of the BUB1-BUB3 complex. Interacts with SKP1; the interaction is direct. Mg(2+) is required as a cofactor. Autophosphorylated.

It localises to the nucleus. Its subcellular location is the chromosome. The protein localises to the centromere. The protein resides in the kinetochore. The enzyme catalyses L-seryl-[protein] + ATP = O-phospho-L-seryl-[protein] + ADP + H(+). The catalysed reaction is L-threonyl-[protein] + ATP = O-phospho-L-threonyl-[protein] + ADP + H(+). In terms of biological role, involved in mitotic spindle assembly checkpoint signaling, a process that delays anaphase until chromosomes are bioriented on the spindle, and in the repair of incorrect mitotic kinetochore-spindle microtubule attachments. The formation of a MAD1-BUB1-BUB3 complex seems to be required for the spindle checkpoint mechanism. Phosphorylates BUB3. Also autophosphorylates. Associates with centromere (CEN) DNA via interaction with SKP1. The association with SKP1 is required for the mitotic delay induced by kinetochore tension defects, but not for the arrest induced by spindle depolymerization or kinetochore assembly defects. This Saccharomyces cerevisiae (strain ATCC 204508 / S288c) (Baker's yeast) protein is Spindle assembly checkpoint serine/threonine-protein kinase BUB1 (BUB1).